Here is a 238-residue protein sequence, read N- to C-terminus: Phosphoribosylaminoimidazole-succinocarboxamide synthase (238 aa).

Belongs to the SAICAR synthetase family.

It carries out the reaction 5-amino-1-(5-phospho-D-ribosyl)imidazole-4-carboxylate + L-aspartate + ATP = (2S)-2-[5-amino-1-(5-phospho-beta-D-ribosyl)imidazole-4-carboxamido]succinate + ADP + phosphate + 2 H(+). Its pathway is purine metabolism; IMP biosynthesis via de novo pathway; 5-amino-1-(5-phospho-D-ribosyl)imidazole-4-carboxamide from 5-amino-1-(5-phospho-D-ribosyl)imidazole-4-carboxylate: step 1/2. The polypeptide is Phosphoribosylaminoimidazole-succinocarboxamide synthase (Desulfitobacterium hafniense (strain Y51)).